We begin with the raw amino-acid sequence, 1143 residues long: Probable ATP-dependent RNA helicase DHX34 (1143 aa).

Disordered regions lie at residues 1–24 and 75–94; these read MPPP…EEEA and TSRK…PALA. The span at 76–85 shows a compositional bias: basic and acidic residues; it reads SRKEEKDPGQ. The Helicase ATP-binding domain occupies 172 to 332; it reads LQTLKEHQVV…FSNAPVVQVP (161 aa). 185–192 contributes to the ATP binding site; the sequence is GDTGCGKS. Positions 279-282 match the DEAH box motif; sequence DEVH. The region spanning 368–536 is the Helicase C-terminal domain; that stretch reads SIDHKYPPEE…SLVLQMKSMS (169 aa). The tract at residues 701 to 955 is negatively regulates interaction with UPF1; that stretch reads QAAQVGDSYS…LRARWESALD (255 aa). Residues 724-766 form a disordered region; that stretch reads LKRQHEEGAGRRRKVLRLQEEQDGGSSDEDRAGPAPPGASDGV. 2 positions are modified to phosphoserine: serine 749 and serine 750. Residues 810-1143 are required for phosphorylation of UPF1. Not required for interaction with UPF1; the sequence is PQLAVPDAFN…EVLRHRKQHV (334 aa). A required for the interaction with SMG1 and subsequent phosphorylation of UPF1 region spans residues 957–1143; the sequence is QLAHQAQQQL…EVLRHRKQHV (187 aa).

It belongs to the DEAD box helicase family. DEAH subfamily. As to quaternary structure, forms a complex with RUVBL1 and RUVBL2. Part of a complex composed of SMG1, DHX34 and UPF1; within the complex DHX34 acts as a scaffolding protein to facilitate SMG1 phosphorylation of UPF1. Interacts with UPF1, MOV10, EIF4A3, XRN2, SMG6, SMG7, SMG9, UPF3A, UPF3B, CASC3/MLN51, XRN1, DIS3 and DCP1A; the interactions are RNA-independent. Interacts with NCBP1/CPB80; the interaction is RNA-dependent. Interacts (via C-terminus) with SMG1; the interaction is RNA-independent. As to expression, expressed in whole blood, testis and spleen. Also expressed in the brain.

It catalyses the reaction ATP + H2O = ADP + phosphate + H(+). In terms of biological role, probable ATP-binding RNA helicase required for nonsense-mediated decay (NMD) degradation of mRNA transcripts containing premature stop codons. Promotes the phosphorylation of UPF1 along with its interaction with key NMD pathway proteins UPF2 and EIF4A3. Interaction with the RUVBL1-RUVBL2 complex results in loss of nucleotide binding ability and ATP hydrolysis of the complex. Negatively regulates the nucleotide binding ability and ATP hydrolysis of the RUVBL1-RUVBL2 complex via induction of N-terminus conformation changes of the RUVBL2 subunits. This Homo sapiens (Human) protein is Probable ATP-dependent RNA helicase DHX34.